Reading from the N-terminus, the 1195-residue chain is Phosphatidylinositol-3,5-bisphosphate 3-phosphatase MTMR4 (1195 aa).

A Phosphoserine modification is found at S8. A Myotubularin phosphatase domain is found at 153 to 570; that stretch reads EHIRCRQEAE…RALHLWTAVY (418 aa). A 1,2-diacyl-sn-glycero-3-phospho-(1D-myo-inositol-3,5-bisphosphate) is bound by residues N320, N345, and I346. A 1,2-diacyl-sn-glycero-3-phospho-(1D-myo-inositol-3-phosphate) contacts are provided by N320, N345, and I346. Residue C407 is the Phosphocysteine intermediate of the active site. Positions 408, 409, 410, 411, 412, 413, 449, and 453 each coordinate a 1,2-diacyl-sn-glycero-3-phospho-(1D-myo-inositol-3,5-bisphosphate). Residues S408, D409, G410, W411, D412, and R413 each coordinate a 1,2-diacyl-sn-glycero-3-phospho-(1D-myo-inositol-3-phosphate). A 1,2-diacyl-sn-glycero-3-phospho-(1D-myo-inositol-3-phosphate) is bound at residue R453. Residues S610 and S629 each carry the phosphoserine modification. 3 disordered regions span residues 645–756, 780–800, and 827–877; these read EPWH…EHCP, ESSQNSPTGTPQQAQPDSMLG, and DPST…LLEN. Positions 720-729 are enriched in basic and acidic residues; it reads PEIKVLEETK. Composition is skewed to polar residues over residues 780–795 and 831–854; these read ESSQNSPTGTPQQAQP and DFLNQDPSGSVASISHQEQLSSVP. The short motif at 1004–1008 is the PY-motif; substrate motif for NEDD4 element; the sequence is VPPLY. Residues 1023–1055 adopt a coiled-coil conformation; it reads HRLRQIEAGYKQEVEQLRRQVRELQMRLDIRHC. The segment at 1114-1174 adopts an FYVE-type zinc-finger fold; the sequence is DHMASHCYNC…VCNSCYEHIQ (61 aa). Residues C1120, C1123, C1136, C1139, C1144, C1147, C1166, and C1169 each contribute to the Zn(2+) site.

The protein belongs to the protein-tyrosine phosphatase family. Non-receptor class myotubularin subfamily. In terms of assembly, homooligomeric. Forms MTMR3:MTMR4 heterooligomers; regulates the localization of both proteins. The MTMR3:MTMR4 heterooligomer can also recruit both CEP55 and PLK1; occurs during early mitosis, regulates the phosphorylation of CEP55 by PLK1 and its recruitment to the midbody where it can mediate cell abscission. Interacts with SMAD2 and SMAD3; negatively regulates TGF-beta signaling through SMAD2 and SMAD3 dephosphorylation and retention in endosomes. Interacts with SMAD1; negatively regulates BMP signaling through SMAD1 dephosphorylation and retention in endosomes. Ubiquitinated. Ubiquitination by NEDD4 probably leads to proteasomal degradation. In terms of processing, phosphorylated by CDK1 during mitosis. In terms of tissue distribution, expressed in brain, heart, kidney, spleen, liver, colon, testis, muscle, placenta, thyroid gland, pancreas, ovary, prostate, skin, peripheral blood, and bone marrow.

It is found in the early endosome membrane. The protein resides in the recycling endosome membrane. Its subcellular location is the late endosome membrane. It localises to the cytoplasmic vesicle. The protein localises to the phagosome membrane. It carries out the reaction a 1,2-diacyl-sn-glycero-3-phospho-(1D-myo-inositol-3-phosphate) + H2O = a 1,2-diacyl-sn-glycero-3-phospho-(1D-myo-inositol) + phosphate. It catalyses the reaction a 1,2-diacyl-sn-glycero-3-phospho-(1D-myo-inositol-3,5-bisphosphate) + H2O = a 1,2-diacyl-sn-glycero-3-phospho-(1D-myo-inositol-5-phosphate) + phosphate. The enzyme catalyses 1,2-dioctanoyl-sn-glycero-3-phospho-(1-D-myo-inositol-3-phosphate) + H2O = 1,2-dioctanoyl-sn-glycero-3-phospho-(1D-myo-inositol) + phosphate. The catalysed reaction is 1,2-dioctanoyl-sn-glycero-3-phospho-(1D-myo-inositol-3,5-bisphosphate) + H2O = 1,2-dioctanoyl-sn-glycero-3-phospho-(1D-myo-inositol-5-phosphate) + phosphate. Its activity is regulated as follows. The phosphatidylinositol-3-phosphate phosphatase activity is inhibited by vanadate. In terms of biological role, lipid phosphatase that specifically dephosphorylates the D-3 position of phosphatidylinositol 3-phosphate and phosphatidylinositol 3,5-bisphosphate, generating phosphatidylinositol and phosphatidylinositol 5-phosphate. Decreases the levels of phosphatidylinositol 3-phosphate, a phospholipid found in cell membranes where it acts as key regulator of both cell signaling and intracellular membrane traffic, in a subset of endosomal membranes to negatively regulate both endocytic recycling and trafficking and/or maturation of endosomes toward lysosomes. Through phosphatidylinositol 3-phosphate turnover in phagosome membranes regulates phagocytosis and phagosome maturation. By decreasing phosphatidylinositol 3-monophosphate (PI3P) levels in immune cells it can also regulate the innate immune response. Beside its lipid phosphatase activity, can also function as a molecular adapter to regulate midbody abscission during mitotic cytokinesis. Can also negatively regulate TGF-beta and BMP signaling through Smad proteins dephosphorylation and retention in endosomes. In Homo sapiens (Human), this protein is Phosphatidylinositol-3,5-bisphosphate 3-phosphatase MTMR4.